Consider the following 495-residue polypeptide: Protein nucleotidyltransferase YdiU (495 aa).

Positions 92, 94, 95, 114, 126, 127, 177, and 184 each coordinate ATP. Asp261 acts as the Proton acceptor in catalysis. Positions 262 and 271 each coordinate Mg(2+). Residue Asp271 coordinates ATP.

It belongs to the SELO family. Mg(2+) serves as cofactor. It depends on Mn(2+) as a cofactor.

The enzyme catalyses L-seryl-[protein] + ATP = 3-O-(5'-adenylyl)-L-seryl-[protein] + diphosphate. It carries out the reaction L-threonyl-[protein] + ATP = 3-O-(5'-adenylyl)-L-threonyl-[protein] + diphosphate. The catalysed reaction is L-tyrosyl-[protein] + ATP = O-(5'-adenylyl)-L-tyrosyl-[protein] + diphosphate. It catalyses the reaction L-histidyl-[protein] + UTP = N(tele)-(5'-uridylyl)-L-histidyl-[protein] + diphosphate. The enzyme catalyses L-seryl-[protein] + UTP = O-(5'-uridylyl)-L-seryl-[protein] + diphosphate. It carries out the reaction L-tyrosyl-[protein] + UTP = O-(5'-uridylyl)-L-tyrosyl-[protein] + diphosphate. Nucleotidyltransferase involved in the post-translational modification of proteins. It can catalyze the addition of adenosine monophosphate (AMP) or uridine monophosphate (UMP) to a protein, resulting in modifications known as AMPylation and UMPylation. This is Protein nucleotidyltransferase YdiU from Bordetella bronchiseptica (strain ATCC BAA-588 / NCTC 13252 / RB50) (Alcaligenes bronchisepticus).